The primary structure comprises 873 residues: Tyrosine-protein kinase transforming protein Fps (873 aa).

Residues A1 to D46 form a disordered region. Residues Q11 to S29 show a composition bias toward polar residues. An F-BAR domain is found at M50–E313. The segment at G445–G471 is disordered. A compositionally biased stretch (basic and acidic residues) spans Q456–R469. Positions W511–V600 constitute an SH2 domain. In terms of domain architecture, Protein kinase spans V612–L865. Residues I618–V626 and K641 contribute to the ATP site. The active-site Proton acceptor is D734. Y764 is modified (phosphotyrosine; by autocatalysis).

This sequence belongs to the protein kinase superfamily. Tyr protein kinase family. Fes/fps subfamily.

The catalysed reaction is L-tyrosyl-[protein] + ATP = O-phospho-L-tyrosyl-[protein] + ADP + H(+). The sequence is that of Tyrosine-protein kinase transforming protein Fps (V-FPS) from Gallus gallus (Chicken).